The sequence spans 361 residues: G kinase-anchoring protein 1-A (361 aa).

Disordered stretches follow at residues 22-111 (DSSS…EDWQ) and 140-183 (FEES…KDFQ). The segment covering 35 to 48 (AHSSGKAHSGSAAR) has biased composition (low complexity). A coiled-coil region spans residues 51 to 79 (NKGNEKKKEKRRKKKEQQQSEANELRNLA). A compositionally biased stretch (basic residues) spans 158 to 168 (KVNKKDKRKNN). Coiled coils occupy residues 246 to 296 (KDGR…QEGE) and 326 to 346 (AALE…VKYQ).

Belongs to the GKAP1 family.

The protein localises to the golgi apparatus. May play a role in the regulation of insulin-dependent IRS1 tyrosine phosphorylation in adipocytes. The protein is G kinase-anchoring protein 1-A (gkap1-a) of Xenopus laevis (African clawed frog).